Reading from the N-terminus, the 307-residue chain is N-acetylmuramic acid 6-phosphate etherase (307 aa).

The SIS domain occupies 62–225 (IVAAFQKGGR…TTASMIRIGK (164 aa)). Glutamate 90 serves as the catalytic Proton donor. Glutamate 121 is a catalytic residue.

This sequence belongs to the GCKR-like family. MurNAc-6-P etherase subfamily. In terms of assembly, homodimer.

The enzyme catalyses N-acetyl-D-muramate 6-phosphate + H2O = N-acetyl-D-glucosamine 6-phosphate + (R)-lactate. It functions in the pathway amino-sugar metabolism; 1,6-anhydro-N-acetylmuramate degradation. The protein operates within amino-sugar metabolism; N-acetylmuramate degradation. It participates in cell wall biogenesis; peptidoglycan recycling. Specifically catalyzes the cleavage of the D-lactyl ether substituent of MurNAc 6-phosphate, producing GlcNAc 6-phosphate and D-lactate. Together with AnmK, is also required for the utilization of anhydro-N-acetylmuramic acid (anhMurNAc) either imported from the medium or derived from its own cell wall murein, and thus plays a role in cell wall recycling. This is N-acetylmuramic acid 6-phosphate etherase from Rhizobium rhizogenes (strain K84 / ATCC BAA-868) (Agrobacterium radiobacter).